The chain runs to 354 residues: Ferrochelatase (354 aa).

The Fe cation site is built by histidine 214 and glutamate 295.

Belongs to the ferrochelatase family.

The protein resides in the cytoplasm. It catalyses the reaction heme b + 2 H(+) = protoporphyrin IX + Fe(2+). It participates in porphyrin-containing compound metabolism; protoheme biosynthesis; protoheme from protoporphyrin-IX: step 1/1. Its function is as follows. Catalyzes the ferrous insertion into protoporphyrin IX. The polypeptide is Ferrochelatase (Burkholderia ambifaria (strain ATCC BAA-244 / DSM 16087 / CCUG 44356 / LMG 19182 / AMMD) (Burkholderia cepacia (strain AMMD))).